A 318-amino-acid polypeptide reads, in one-letter code: Mitochondrial coenzyme A transporter SLC25A42 (318 aa).

Solcar repeat units follow at residues 31–117 (RQVL…YKRI), 129–214 (LPPW…LKSL), and 224–312 (PYPF…MQIL). 6 consecutive transmembrane segments (helical) span residues 33 to 53 (VLSS…AVAP), 89 to 109 (LWRG…IQFS), 135 to 155 (LFAG…LDLV), 186 to 206 (LYHG…LSFF), 230 to 250 (MIFG…LDVV), and 293 to 313 (VKGP…QILL).

This sequence belongs to the mitochondrial carrier (TC 2.A.29) family.

Its subcellular location is the mitochondrion inner membrane. The catalysed reaction is ADP(out) + CoA(in) = ADP(in) + CoA(out). It carries out the reaction 3'-dephospho-CoA(in) + ADP(out) = 3'-dephospho-CoA(out) + ADP(in). The enzyme catalyses adenosine 3',5'-bisphosphate(in) + ADP(out) = adenosine 3',5'-bisphosphate(out) + ADP(in). It catalyses the reaction AMP(in) + ADP(out) = AMP(out) + ADP(in). The catalysed reaction is dADP(in) + ADP(out) = dADP(out) + ADP(in). It carries out the reaction ADP(in) + ATP(out) = ADP(out) + ATP(in). Its function is as follows. Mitochondrial carrier mediating the transport of coenzyme A (CoA) in mitochondria in exchange for intramitochondrial (deoxy)adenine nucleotides and adenosine 3',5'-diphosphate. The chain is Mitochondrial coenzyme A transporter SLC25A42 (SLC25A42) from Homo sapiens (Human).